The primary structure comprises 331 residues: UPF0194 membrane protein YbhG (331 aa).

A signal peptide spans 1 to 19 (MKKPVVIGLVIAAIVAVIA). Residues 140-209 (RTISANDLEN…DLQDTTLIAP (70 aa)) are a coiled coil.

It belongs to the UPF0194 family.

It localises to the periplasm. This is UPF0194 membrane protein YbhG (ybhG) from Salmonella typhi.